Reading from the N-terminus, the 55-residue chain is MSGSGVLLLTLLLLVPLSALAKECSMYYCSGGDFCCPGLKCGDPTGKKICIEPGK.

The first 21 residues, 1 to 21, serve as a signal peptide directing secretion; that stretch reads MSGSGVLLLTLLLLVPLSALA. 3 cysteine pairs are disulfide-bonded: Cys24-Cys36, Cys29-Cys41, and Cys35-Cys50.

Expressed by the venom duct.

It localises to the secreted. Functionally, probable neurotoxin. The polypeptide is Conotoxin Cal6.40 (Californiconus californicus (California cone)).